Reading from the N-terminus, the 247-residue chain is Ribosomal RNA small subunit methyltransferase G (247 aa).

S-adenosyl-L-methionine contacts are provided by residues glycine 84, phenylalanine 89, 136–137 (AE), and arginine 155.

Belongs to the methyltransferase superfamily. RNA methyltransferase RsmG family.

The protein localises to the cytoplasm. In terms of biological role, specifically methylates the N7 position of a guanine in 16S rRNA. This Prochlorococcus marinus (strain MIT 9303) protein is Ribosomal RNA small subunit methyltransferase G.